The primary structure comprises 382 residues: Putative 12-oxophytodienoate reductase 3 (382 aa).

FMN is bound by residues 37–39, Ala-70, and Gln-112; that span reads PLT. Over residues 120–138 the composition is skewed to polar residues; it reads STNDQQPNGQAPISSTDKQ. The segment at 120–147 is disordered; the sequence is STNDQQPNGQAPISSTDKQITPDDSHTV. Position 184 to 187 (184 to 187) interacts with substrate; it reads HGAH. The active-site Proton donor is the Tyr-189. Position 236 (Arg-236) interacts with FMN. A substrate-binding site is contributed by Arg-277. FMN-binding positions include Gly-307 and 328–329; that span reads GR.

The protein belongs to the NADH:flavin oxidoreductase/NADH oxidase family. It depends on FMN as a cofactor.

Putative oxophytodienoate reductase that may be involved in the biosynthesis or metabolism of oxylipin signaling molecules. In Oryza sativa subsp. japonica (Rice), this protein is Putative 12-oxophytodienoate reductase 3 (OPR3).